A 372-amino-acid polypeptide reads, in one-letter code: Putative F-box/kelch-repeat protein At3g22730 (372 aa).

The 50-residue stretch at M1 to A50 folds into the F-box domain. 3 Kelch repeats span residues I155 to G204, A245 to G293, and K324 to E372.

This is Putative F-box/kelch-repeat protein At3g22730 from Arabidopsis thaliana (Mouse-ear cress).